A 326-amino-acid chain; its full sequence is MSSSNLGNVVCVTGASGYIASWLVRLLLHRGYTVKATVRDPNDPKKVDHLVKLDGAKERLQLFKANLLEEGAFDSVVQGCHGVFHTASPFYHDVKDPQAELIDPALKGTLNVLNSCAKSPSLKRVVLTSSIAAVAYNGKPRTPDVVVDETWFTDADFCAKSNLWYVVSKTLAEEAAWKFVKENNIDMVTINPAMVIGPLLQPVLNTSAAAILNLINGAQTFPNASFGWVNVKDVANAHILAYENASASGRHCLVERVAHYSEVVRILRELYPSLQLPEKCADDKPYVPIYQVSKEKAKSLGLEYTPLEVSIKETVESLKEKKFANL.

NADP(+) is bound by residues 14-20 (GASGYIA), Arg39, Lys46, 66-67 (NL), and 86-88 (TAS). The (E)-coniferaldehyde site is built by Ser130, Tyr136, Arg141, and Tyr165. Residues Tyr165, Lys169, 192-195 (PAMV), and Ser207 contribute to the NADP(+) site. Lys169 (proton donor) is an active-site residue. (E)-coniferaldehyde-binding residues include Met194, Ser207, Phe226, Val257, and Tyr290.

The protein belongs to the NAD(P)-dependent epimerase/dehydratase family. Dihydroflavonol-4-reductase subfamily.

The protein resides in the cytoplasm. It catalyses the reaction (E)-cinnamaldehyde + NADP(+) + CoA = (E)-cinnamoyl-CoA + NADPH + H(+). It carries out the reaction (E)-coniferaldehyde + NADP(+) + CoA = (E)-feruloyl-CoA + NADPH + H(+). The enzyme catalyses (E)-4-coumaraldehyde + NADP(+) + CoA = (E)-4-coumaroyl-CoA + NADPH + H(+). The protein operates within aromatic compound metabolism; phenylpropanoid biosynthesis. Involved in lignin biosynthesis. Regulates the monolignol composition by catalyzing the conversion of cinnamoyl-CoAs into their corresponding cinnamaldehydes. Can use coumaraldehyde and coniferaldehyde as substrates, but barely sinapaldehyde. The polypeptide is Cinnamoyl-CoA reductase CAD2 (Medicago truncatula (Barrel medic)).